The following is a 187-amino-acid chain: Adenine phosphoribosyltransferase 1 (187 aa).

S68 is modified (phosphoserine). 133 to 137 (ATGGS) is a binding site for AMP.

This sequence belongs to the purine/pyrimidine phosphoribosyltransferase family. As to quaternary structure, homodimer. Mg(2+) serves as cofactor.

The protein localises to the cytoplasm. Its subcellular location is the nucleus. It catalyses the reaction AMP + diphosphate = 5-phospho-alpha-D-ribose 1-diphosphate + adenine. The protein operates within purine metabolism; AMP biosynthesis via salvage pathway; AMP from adenine: step 1/1. Functionally, catalyzes a salvage reaction resulting in the formation of AMP, that is energically less costly than de novo synthesis. The protein is Adenine phosphoribosyltransferase 1 of Saccharomyces cerevisiae (strain ATCC 204508 / S288c) (Baker's yeast).